The sequence spans 279 residues: uncharacterized protein (279 aa).

An HTH lysR-type domain is found at 14-71; sequence ITPNQIKLLIALHKTKSQNEAAKLLNIKPSSFNIQLKRLENKLGVKLYYSSPNGTVLT. The segment at residues 31 to 50 is a DNA-binding region (H-T-H motif); it reads QNEAAKLLNIKPSSFNIQLK.

The protein belongs to the LysR transcriptional regulatory family.

This is an uncharacterized protein from Methanocaldococcus jannaschii (strain ATCC 43067 / DSM 2661 / JAL-1 / JCM 10045 / NBRC 100440) (Methanococcus jannaschii).